We begin with the raw amino-acid sequence, 885 residues long: MSNVRISEIANELGYPSKEIVEKAQELGLKVKTHSNAVSLEEAEAIYEYVQTGVIPDKFKKKKSEPKAKKEPKKETEKEPAKKEEKPKTEPKKAATKAEPKPEKAKAEPKKEAQISEEKPKTEPKKEEPVKVEQKPAEAPKPKESLADVTQKRRGLVIVKKKKDYEAPAPIKEEKKAEAAVTNISDFKSMFSASDENLARKKKKEKKVTVVSKKDSAEKMDLLGGSDFGDIVLEDEDVVVLPDFSFKTPAPTPMQRTKQPNAMKTTVNNTINSFGEGGIQRRARKKHKKPENKQNSEAVTSINIPKEIRVYEFAEKLNKQPSEVIGKLFMLGMMTTKNDFLDEDAIEILADEFNVEVNIIDDQKEFDYVAAYEEEIKDDENLQPRAPVITIMGHVDHGKTSLLDYIRKSRVAAGEAGGITQHVGAYMVNKNGRNITFIDTPGHEAFTAMRARGAGVTDIVIIVVAADDGVKPQTKEAVSHAKAAGVPIIIAINKMDKESANPDLVKTGLAELDIMPTEWGGKYEFVPISAKTGMGIDDLLEIVLLQADLLELKANPKANAKATVIESSLQKGRGPVATIIVENGTLHVGDTVVAGVAYGKIRSLLDDQGRSLREIKPGECGVIVGLSEIAEAGETLIGVKTDKEAREYAQKKAEYIRQKELSKSTKVSIDELSAKIAEGELKTLPVIIKADVGGSLEALKASLEKLANDEIRVNVIHSGVGGITQSDVALASASNDCIILGFNIRPTGEIKEKAKESGVEIKTYNVIYNLIDDVKAILGGLMSPIIREEQLGQAQVRQVIHVPKVGTIAGCIVTEGTINRGAKIRLIREGVVVYEGLVSSLKRFKDDVKEVAKGYECGVGIENFNDIRENDYIESFKEVKEKATL.

Disordered stretches follow at residues 55–150 (IPDK…ADVT) and 269–300 (NTINSFGEGGIQRRARKKHKKPENKQNSEAVT). The segment covering 65–146 (EPKAKKEPKK…AEAPKPKESL (82 aa)) has biased composition (basic and acidic residues). Residues 281–290 (RRARKKHKKP) show a composition bias toward basic residues. A tr-type G domain is found at 384 to 553 (PRAPVITIMG…LLQADLLELK (170 aa)). The segment at 393-400 (GHVDHGKT) is G1. GTP is bound at residue 393-400 (GHVDHGKT). Positions 418 to 422 (GITQH) are G2. The tract at residues 439–442 (DTPG) is G3. GTP-binding positions include 439–443 (DTPGH) and 493–496 (NKMD). The tract at residues 493-496 (NKMD) is G4. A G5 region spans residues 529 to 531 (SAK).

It belongs to the TRAFAC class translation factor GTPase superfamily. Classic translation factor GTPase family. IF-2 subfamily.

It is found in the cytoplasm. In terms of biological role, one of the essential components for the initiation of protein synthesis. Protects formylmethionyl-tRNA from spontaneous hydrolysis and promotes its binding to the 30S ribosomal subunits. Also involved in the hydrolysis of GTP during the formation of the 70S ribosomal complex. This chain is Translation initiation factor IF-2, found in Campylobacter concisus (strain 13826).